The chain runs to 366 residues: Chorismate synthase (366 aa).

Residues R48 and R54 each coordinate NADP(+). Residues 125-127, 238-239, G278, 293-297, and R319 contribute to the FMN site; these read RSS, NA, and KPTSS.

The protein belongs to the chorismate synthase family. In terms of assembly, homotetramer. FMNH2 is required as a cofactor.

It carries out the reaction 5-O-(1-carboxyvinyl)-3-phosphoshikimate = chorismate + phosphate. Its pathway is metabolic intermediate biosynthesis; chorismate biosynthesis; chorismate from D-erythrose 4-phosphate and phosphoenolpyruvate: step 7/7. Its function is as follows. Catalyzes the anti-1,4-elimination of the C-3 phosphate and the C-6 proR hydrogen from 5-enolpyruvylshikimate-3-phosphate (EPSP) to yield chorismate, which is the branch point compound that serves as the starting substrate for the three terminal pathways of aromatic amino acid biosynthesis. This reaction introduces a second double bond into the aromatic ring system. This chain is Chorismate synthase, found in Thiobacillus denitrificans (strain ATCC 25259 / T1).